We begin with the raw amino-acid sequence, 457 residues long: Sensor protein CpxA (457 aa).

Over 1–7 (MIGSLTA) the chain is Cytoplasmic. Residues 8-29 (RIFAIFWLTLALVLMLVLMLPK) form a helical membrane-spanning segment. Over 30–163 (LDSRQMTELL…SDFINLLFDR (134 aa)) the chain is Periplasmic. Residues 164-184 (PLLLLIVTMLVSTPLLLWLAW) traverse the membrane as a helical segment. One can recognise an HAMP domain in the interval 185 to 237 (SLAKPARKLKNAADEVAQGNLRQHPELEAGPQEFLAAGASFNQMVTALERMMT). Residues 185-457 (SLAKPARKLK…VIWLPLYKRS (273 aa)) are Cytoplasmic-facing. In terms of domain architecture, Histidine kinase spans 245–455 (DISHELRTPL…RLVIWLPLYK (211 aa)). At His-248 the chain carries Phosphohistidine; by autocatalysis.

It is found in the cell inner membrane. It catalyses the reaction ATP + protein L-histidine = ADP + protein N-phospho-L-histidine.. In terms of biological role, this protein is involved in several diverse cellular processes, such as the functioning of acetohydroxyacid synthetase I, in the biosynthesis of isoleucine and valine, the TraJ protein activation activity for tra gene expression in F plasmid, and the synthesis, translocation, or stability of cell envelope proteins. Activates CpxR by phosphorylation. The polypeptide is Sensor protein CpxA (cpxA) (Escherichia coli O157:H7).